Consider the following 262-residue polypeptide: Hydroxyethylthiazole kinase (262 aa).

Met50 serves as a coordination point for substrate. ATP-binding residues include Arg125 and Thr171. Residue Gly198 coordinates substrate.

Belongs to the Thz kinase family. The cofactor is Mg(2+).

It carries out the reaction 5-(2-hydroxyethyl)-4-methylthiazole + ATP = 4-methyl-5-(2-phosphooxyethyl)-thiazole + ADP + H(+). It participates in cofactor biosynthesis; thiamine diphosphate biosynthesis; 4-methyl-5-(2-phosphoethyl)-thiazole from 5-(2-hydroxyethyl)-4-methylthiazole: step 1/1. Functionally, catalyzes the phosphorylation of the hydroxyl group of 4-methyl-5-beta-hydroxyethylthiazole (THZ). The chain is Hydroxyethylthiazole kinase from Escherichia coli O17:K52:H18 (strain UMN026 / ExPEC).